We begin with the raw amino-acid sequence, 166 residues long: Large ribosomal subunit protein uL10 (166 aa).

Belongs to the universal ribosomal protein uL10 family. In terms of assembly, part of the ribosomal stalk of the 50S ribosomal subunit. The N-terminus interacts with L11 and the large rRNA to form the base of the stalk. The C-terminus forms an elongated spine to which L12 dimers bind in a sequential fashion forming a multimeric L10(L12)X complex.

Its function is as follows. Forms part of the ribosomal stalk, playing a central role in the interaction of the ribosome with GTP-bound translation factors. The polypeptide is Large ribosomal subunit protein uL10 (Pseudomonas syringae pv. tomato (strain ATCC BAA-871 / DC3000)).